The sequence spans 1019 residues: MNSIQVKNEPMLASFASTSTNGKAKRSAKPSLFSGSEVSSDDDEEKPLAKRPKVEDSDSDAPLTSTVSSQNGVQKRSGSSNNDDNDDDSDSDSDAPLTALVKKSNGSDDDEDDDDDDDEGDDDDEEDDDDDDDDDDKPLSKSSKSNRKPPKTMSITGSGEKKWDVLIHKGPRFPDPYQPLPKDVKLKYDGRPVDLPWQTEEIAMFYAVKLETQHAQNAIFNRNFFDDFKTDLKKYPPRDGTQIKSFDKLDFRDMYNYWRSLKDAELERKKALAPSARKREIEERKAEETKWKICLVDGVEQRVGNVNVEPPGLFLGRGAHPKAGKVKRRISPGDITINHSADHPAPQPPAGMGDWAEVVEKKDVTWLAYWKENINGQYKYVFLDATSNFKTNSDREKFEKARKLDTVVKQIRRDVNKNLKSKVRHERQIATIVWLIDNFSLRAGNEKGEDEAETYGVCSLRCEHAQIKMPDTIHLEFLGKDSMKFEEDLKITNPDVFKNIAMFLKSNGMKDKSGNYVRKKPSDPIFCAPESGSGKMQPLQPNSVNQFLSKYMKGLSAKVFRTYNASVTFQGLLEQTEEWLKSRPNAAEREINQTNLRLAYNEANRQVAILCNHQKTVNPMLLNRNLERTQDKIFQIRYEIMKEQQKILTFHKVSELKKEFKVKEHPFMKQFDKIMQKQDLDAEKVKQYEEQMISDKKSKLESTFKRQQSELQYQLEQKGLTGDDGTPKKGKKAKNVEEEVRSSIKGFKDKKQVDEELKALNETAKRLEKERKTNKSQATSCNFVSSAKKILSKYEMIKKQEAELVNKNNTSDVALSTSKLNYIDPRITLAWLKEWDDRLSDLGQGKAAPKKKVKKEEEENDIKPKKKDAKGAASKKRAAKTGLANSTGDSEKMELGLQVMNISQFFANALQKKFKWAASGDDGRDISAKWVFVKDAQSKMRKLDSAERKGQKGGSMAAMTDAADSKEAQPKVNCVLKKQTSADRKMSKPIKAVDKTEESDDDLSSDSSDDEDKPLAAVV.

A disordered region spans residues 1-160; it reads MNSIQVKNEP…KTMSITGSGE (160 aa). A compositionally biased stretch (basic and acidic residues) spans 46–56; sequence KPLAKRPKVED. Positions 62 to 78 are enriched in polar residues; sequence PLTSTVSSQNGVQKRSG. Composition is skewed to acidic residues over residues 83 to 93 and 107 to 136; these read DDNDDDSDSDS and SDDDEDDDDDDDEGDDDDEEDDDDDDDDDD. Interaction with DNA stretches follow at residues 379–380, 442–447, and 556–558; these read KY, RAGNEK, and SAK. The Topo IB-type catalytic domain occupies 386-860; it reads TSNFKTNSDR…KKVKKEEEEN (475 aa). The segment at 716–737 is disordered; it reads EQKGLTGDDGTPKKGKKAKNVE. Residue Tyr822 is the O-(3'-phospho-DNA)-tyrosine intermediate of the active site. 2 disordered regions span residues 843-890 and 940-1019; these read GQGK…TGDS and MRKL…AAVV. The span at 854 to 863 shows a compositional bias: basic and acidic residues; it reads KKEEEENDIK. Basic residues predominate over residues 864–879; it reads PKKKDAKGAASKKRAA. Composition is skewed to basic and acidic residues over residues 940 to 950 and 980 to 996; these read MRKLDSAERKG and TSADRKMSKPIKAVDKT. Positions 997 to 1012 are enriched in acidic residues; the sequence is EESDDDLSSDSSDDED.

This sequence belongs to the type IB topoisomerase family. In terms of assembly, monomer.

It carries out the reaction ATP-independent breakage of single-stranded DNA, followed by passage and rejoining.. Releases the supercoiling and torsional tension of DNA introduced during the DNA replication and transcription by transiently cleaving and rejoining one strand of the DNA duplex. Introduces a single-strand break via transesterification at a target site in duplex DNA. The scissile phosphodiester is attacked by the catalytic tyrosine of the enzyme, resulting in the formation of a DNA-(3'-phosphotyrosyl)-enzyme intermediate and the expulsion of a 5'-OH DNA strand. The free DNA strand then rotates around the intact phosphodiester bond on the opposing strand, thus removing DNA supercoils. Finally, in the religation step, the DNA 5'-OH attacks the covalent intermediate to expel the active-site tyrosine and restore the DNA phosphodiester backbone. The polypeptide is DNA topoisomerase 1 (TOP1) (Mycosarcoma maydis (Corn smut fungus)).